Here is a 93-residue protein sequence, read N- to C-terminus: Integration host factor subunit beta (93 aa).

It belongs to the bacterial histone-like protein family. In terms of assembly, heterodimer of an alpha and a beta chain.

In terms of biological role, this protein is one of the two subunits of integration host factor, a specific DNA-binding protein that functions in genetic recombination as well as in transcriptional and translational control. In Cereibacter sphaeroides (strain ATCC 17023 / DSM 158 / JCM 6121 / CCUG 31486 / LMG 2827 / NBRC 12203 / NCIMB 8253 / ATH 2.4.1.) (Rhodobacter sphaeroides), this protein is Integration host factor subunit beta (ihfB).